A 254-amino-acid chain; its full sequence is Urease accessory protein UreD (254 aa).

The protein belongs to the UreD family. As to quaternary structure, ureD, UreF and UreG form a complex that acts as a GTP-hydrolysis-dependent molecular chaperone, activating the urease apoprotein by helping to assemble the nickel containing metallocenter of UreC. The UreE protein probably delivers the nickel.

It is found in the cytoplasm. In terms of biological role, required for maturation of urease via the functional incorporation of the urease nickel metallocenter. The polypeptide is Urease accessory protein UreD (Streptomyces coelicolor (strain ATCC BAA-471 / A3(2) / M145)).